The following is a 418-amino-acid chain: NADH-quinone oxidoreductase subunit D (418 aa).

Belongs to the complex I 49 kDa subunit family. As to quaternary structure, NDH-1 is composed of 14 different subunits. Subunits NuoB, C, D, E, F, and G constitute the peripheral sector of the complex.

The protein resides in the cell inner membrane. The enzyme catalyses a quinone + NADH + 5 H(+)(in) = a quinol + NAD(+) + 4 H(+)(out). In terms of biological role, NDH-1 shuttles electrons from NADH, via FMN and iron-sulfur (Fe-S) centers, to quinones in the respiratory chain. The immediate electron acceptor for the enzyme in this species is believed to be ubiquinone. Couples the redox reaction to proton translocation (for every two electrons transferred, four hydrogen ions are translocated across the cytoplasmic membrane), and thus conserves the redox energy in a proton gradient. This chain is NADH-quinone oxidoreductase subunit D, found in Neisseria gonorrhoeae (strain ATCC 700825 / FA 1090).